Here is a 258-residue protein sequence, read N- to C-terminus: NAD(P)H-hydrate epimerase (258 aa).

Residues 15-244 form the YjeF N-terminal domain; that stretch reads AFQLDQELMS…RIAKEYGIED (230 aa). 75 to 79 lines the (6S)-NADPHX pocket; it reads NNGGD. Residues Asn-76 and Asp-145 each coordinate K(+). Residues 149-155 and Asp-181 each bind (6S)-NADPHX; that span reads GFSFKPP. Ser-184 serves as a coordination point for K(+).

This sequence belongs to the NnrE/AIBP family. It depends on K(+) as a cofactor.

It localises to the cytoplasm. Its subcellular location is the mitochondrion. It catalyses the reaction (6R)-NADHX = (6S)-NADHX. The catalysed reaction is (6R)-NADPHX = (6S)-NADPHX. Its function is as follows. Catalyzes the epimerization of the S- and R-forms of NAD(P)HX, a damaged form of NAD(P)H that is a result of enzymatic or heat-dependent hydration. This is a prerequisite for the S-specific NAD(P)H-hydrate dehydratase to allow the repair of both epimers of NAD(P)HX. This chain is NAD(P)H-hydrate epimerase, found in Candida albicans (strain SC5314 / ATCC MYA-2876) (Yeast).